A 77-amino-acid chain; its full sequence is Neurexophilin-4 (77 aa).

A v (Cys-rich) region spans residues 1–77 (NCHVEYEKTN…NFQSEHPYFG (77 aa)).

This sequence belongs to the neurexophilin family. May be proteolytically processed at the boundary between the N-terminal non-conserved and the central conserved domain in neuron-like cells.

Its subcellular location is the secreted. Its function is as follows. May be signaling molecules that resemble neuropeptides and that act by binding to alpha-neurexins and possibly other receptors. This is Neurexophilin-4 (NXPH4) from Macaca mulatta (Rhesus macaque).